The chain runs to 191 residues: uncharacterized protein (191 aa).

Residues 5-65 (GDSREKILHT…IEAVTYTGKI (61 aa)) enclose the HTH tetR-type domain. Positions 28-47 (GLNQIVKESGAPKGSLYHFF) form a DNA-binding region, H-T-H motif.

This is an uncharacterized protein from Bacillus subtilis (strain 168).